The sequence spans 461 residues: E3 ubiquitin-protein ligase TRIM15 (461 aa).

Residues 12–57 form an RING-type zinc finger; the sequence is CSDCQGRLEDAVTAACGHTFCRLCLPLPPQMGAQPSSRVLLCPVCQ. Residues 74 to 115 form a B box-type zinc finger; that stretch reads LGETYCEEHGEKIYFFCENDAEFLCVFCREGPSHQAHAVGFL. 4 residues coordinate Zn(2+): cysteine 79, histidine 82, cysteine 101, and histidine 107. The stretch at 123–230 forms a coiled coil; the sequence is RDRLRGRLEA…EKCQQPASEL (108 aa). In terms of domain architecture, B30.2/SPRY spans 272 to 461; the sequence is EMLRAFSENL…KKGSCLTLKG (190 aa).

It belongs to the TRIM/RBCC family. In terms of assembly, interacts with paxillin/PXN; this interaction recruits TRIM15 to focal adhesions. Interacts with TRIM8; this interaction prevents TRIM8 cytoplasmic translocation.

The protein localises to the cytoplasm. It is found in the nucleus. Its subcellular location is the cell junction. The protein resides in the focal adhesion. The enzyme catalyses S-ubiquitinyl-[E2 ubiquitin-conjugating enzyme]-L-cysteine + [acceptor protein]-L-lysine = [E2 ubiquitin-conjugating enzyme]-L-cysteine + N(6)-ubiquitinyl-[acceptor protein]-L-lysine.. Its function is as follows. E3 ubiquitin ligase that plays a role in several processes including innate antiviral immnity, cell migration and chemotaxis. Acts as a 'Lys-63'-specific ubiquitin ligase for MAPK1/ERK2 and MAPK3/ERK1, promoting their activation by facilitating their interaction with MAP2K1 and MAP2K2. Also plays a role in cell migration and chemotaxis by acting as a stable focal adhesion component upon recruitment by multi-adapter protein paxillin/PXN. Functions in the RIGI-mediated interferon induction pathway upstream or at the level of MAVS. Inhibits NF-kappa-B activation by turnover of 'Lys-63'-linked ubiquitination of MAP3K7/TAK1. Mechanistically, prevents TRIM8 cytoplasmic translocation and thus inhibits TRIM8-mediated 'Lys-63'-linked polyubiquitination of MAP3K7/TAK1 in the cytoplasm. Also has an important regulatory effect on the activation of hepatic stellate cells (HSCs). The polypeptide is E3 ubiquitin-protein ligase TRIM15 (TRIM15) (Sus scrofa (Pig)).